Here is a 239-residue protein sequence, read N- to C-terminus: Large ribosomal subunit protein uL1 (239 aa).

It belongs to the universal ribosomal protein uL1 family. In terms of assembly, part of the 50S ribosomal subunit.

Functionally, binds directly to 23S rRNA. The L1 stalk is quite mobile in the ribosome, and is involved in E site tRNA release. Protein L1 is also a translational repressor protein, it controls the translation of the L11 operon by binding to its mRNA. The chain is Large ribosomal subunit protein uL1 from Rickettsia akari (strain Hartford).